Consider the following 224-residue polypeptide: Large ribosomal subunit protein uL3 (224 aa).

N5-methylglutamine is present on glutamine 159.

The protein belongs to the universal ribosomal protein uL3 family. Part of the 50S ribosomal subunit. Forms a cluster with proteins L14 and L19. Post-translationally, methylated by PrmB.

Its function is as follows. One of the primary rRNA binding proteins, it binds directly near the 3'-end of the 23S rRNA, where it nucleates assembly of the 50S subunit. This chain is Large ribosomal subunit protein uL3, found in Herminiimonas arsenicoxydans.